The sequence spans 129 residues: N16.2 matrix protein (129 aa).

Positions 1–23 are cleaved as a signal peptide; that stretch reads MKCTLRWTITALVLLGICHLARP. A run of 5 repeats spans residues 91–92, 93–94, 95–96, 97–98, and 99–100. The 5 X 2 AA tandem repeats of N-G stretch occupies residues 91-100; the sequence is NGNGDGNGNG.

Belongs to the N16 matrix protein family. In terms of assembly, heterooligomer; disulfide-linked. Pif97, Pif80, N16 and other proteins form a complex. As to expression, component of conchiolin, the organic matrix of nacre. Expressed at extremely high levels in the dorsal region of the mantle, which region may be responsible for the nacreous layer formation, but only in trace amounts at the mantle edge, which region may be responsible for the prismatic layer formation.

The protein resides in the secreted. Its subcellular location is the extracellular space. It is found in the extracellular matrix. Its function is as follows. May be specifically involved in the formation of the nacreous layer. This is N16.2 matrix protein from Pinctada fucata (Akoya pearl oyster).